Reading from the N-terminus, the 324-residue chain is Putative GTPase PYRAB02490 (324 aa).

GTP-binding positions include 52–60 (GPPGAGKST), D194, and 229–231 (VAT).

This sequence belongs to the SIMIBI class G3E GTPase family. ArgK/MeaB subfamily.

Functionally, may have GTPase activity. May also bind and hydrolyze ATP. May function as chaperone. The chain is Putative GTPase PYRAB02490 from Pyrococcus abyssi (strain GE5 / Orsay).